Here is a 336-residue protein sequence, read N- to C-terminus: PHD finger protein 11 (336 aa).

Positions 1–20 (MAEETAPPCGPVSTGGSLSP) are disordered. The segment at 25-61 (KRTCALCPDGHEWSVIYFAPSANIAAHENCLLYSSGL) adopts a C2HC pre-PHD-type zinc-finger fold. The PHD-type zinc-finger motif lies at 91–143 (LKCSLCNKGGATVGCDLSSCRKSYHYVCAKKDHAIPQVDEDLGTYKIFCPEHP). Disordered regions lie at residues 139-179 (CPEH…KKMK) and 303-336 (DPSG…GDSL). Over residues 303–314 (DPSGSTSGSLLP) the composition is skewed to low complexity.

In terms of assembly, interacts with BRCA1 and RELA.

It localises to the nucleus. Functionally, positive regulator of Th1-type cytokine gene expression. The chain is PHD finger protein 11 (Phf11) from Rattus norvegicus (Rat).